The primary structure comprises 436 residues: Serine hydroxymethyltransferase (436 aa).

(6S)-5,6,7,8-tetrahydrofolate contacts are provided by residues L120 and G124 to L126. The residue at position 229 (K229) is an N6-(pyridoxal phosphate)lysine.

Belongs to the SHMT family. As to quaternary structure, homodimer. It depends on pyridoxal 5'-phosphate as a cofactor.

The protein resides in the cytoplasm. It carries out the reaction (6R)-5,10-methylene-5,6,7,8-tetrahydrofolate + glycine + H2O = (6S)-5,6,7,8-tetrahydrofolate + L-serine. The protein operates within one-carbon metabolism; tetrahydrofolate interconversion. Its pathway is amino-acid biosynthesis; glycine biosynthesis; glycine from L-serine: step 1/1. Its function is as follows. Catalyzes the reversible interconversion of serine and glycine with tetrahydrofolate (THF) serving as the one-carbon carrier. This reaction serves as the major source of one-carbon groups required for the biosynthesis of purines, thymidylate, methionine, and other important biomolecules. Also exhibits THF-independent aldolase activity toward beta-hydroxyamino acids, producing glycine and aldehydes, via a retro-aldol mechanism. In Roseiflexus castenholzii (strain DSM 13941 / HLO8), this protein is Serine hydroxymethyltransferase.